A 195-amino-acid chain; its full sequence is Interferon tau-8 (195 aa).

The first 23 residues, 1-23, serve as a signal peptide directing secretion; the sequence is MAFVLSLLMALVLVSYGPGGSLG. 2 cysteine pairs are disulfide-bonded: Cys24/Cys122 and Cys52/Cys162.

The protein belongs to the alpha/beta interferon family. IFN-alphaII subfamily. As to expression, constitutively and exclusively expressed in the mononuclear cells of the extraembryonic trophectoderm.

Its subcellular location is the secreted. Functionally, paracrine hormone primarily responsible for maternal recognition of pregnancy. Interacts with endometrial receptors, probably type I interferon receptors, and blocks estrogen receptor expression, preventing the estrogen-induced increase in oxytocin receptor expression in the endometrium. This results in the suppression of the pulsatile endometrial release of the luteolytic hormone prostaglandin F2-alpha, hindering the regression of the corpus luteum (luteolysis) and therefore a return to ovarian cyclicity. This, and a possible direct effect of IFN-tau on prostaglandin synthesis, leads in turn to continued ovarian progesterone secretion, which stimulates the secretion by the endometrium of the nutrients required for the growth of the conceptus. In summary, displays particularly high antiviral and antiproliferative potency concurrently with particular weak cytotoxicity, high antiluteolytic activity and immunomodulatory properties. In contrast with other IFNs, IFN-tau is not virally inducible. The polypeptide is Interferon tau-8 (IFNT8) (Ovis aries (Sheep)).